The sequence spans 663 residues: Protein MNE1 (663 aa).

This is Protein MNE1 (MNE1) from Saccharomyces cerevisiae (strain ATCC 204508 / S288c) (Baker's yeast).